The primary structure comprises 223 residues: Translation initiation factor 6 (223 aa).

It belongs to the eIF-6 family.

Its function is as follows. Binds to the 50S ribosomal subunit and prevents its association with the 30S ribosomal subunit to form the 70S initiation complex. The chain is Translation initiation factor 6 from Methanobrevibacter smithii (strain ATCC 35061 / DSM 861 / OCM 144 / PS).